The sequence spans 66 residues: Stress-induced protein KIN1 (66 aa).

Positions 1–13 (MSETNKNAFQAGQ) are enriched in polar residues. Residues 1–52 (MSETNKNAFQAGQTAGKAEEKSNVLLDKAKDAAAGAGAGAQQAGKSVSDAAA) are disordered. The span at 17-31 (KAEEKSNVLLDKAKD) shows a compositional bias: basic and acidic residues. Repeats lie at residues 31–35 (DAAAG) and 49–53 (DAAAG). The segment covering 32–45 (AAAGAGAGAQQAGK) has biased composition (low complexity).

The sequence is that of Stress-induced protein KIN1 (KIN1) from Arabidopsis thaliana (Mouse-ear cress).